Here is a 461-residue protein sequence, read N- to C-terminus: Cysteine--tRNA ligase (461 aa).

Cysteine 29 serves as a coordination point for Zn(2+). Positions 31-41 (MTVYDFCHIGH) match the 'HIGH' region motif. Residues cysteine 210, histidine 235, and glutamate 239 each coordinate Zn(2+). The 'KMSKS' region motif lies at 267–271 (KMSKS). Lysine 270 is a binding site for ATP.

This sequence belongs to the class-I aminoacyl-tRNA synthetase family. As to quaternary structure, monomer. It depends on Zn(2+) as a cofactor.

It localises to the cytoplasm. It catalyses the reaction tRNA(Cys) + L-cysteine + ATP = L-cysteinyl-tRNA(Cys) + AMP + diphosphate. In Azotobacter vinelandii (strain DJ / ATCC BAA-1303), this protein is Cysteine--tRNA ligase.